A 389-amino-acid chain; its full sequence is Protein OSCP1 (389 aa).

Expressed predominantly in testis, also found in placenta and to a lesser extent in thymus and small intestine; abundantly expressed in tumor-derived cell lines. Ubiquitously expressed.

It is found in the basal cell membrane. May be involved in drug clearance in the placenta. This chain is Protein OSCP1 (OSCP1), found in Homo sapiens (Human).